Consider the following 67-residue polypeptide: Neurotoxin Cex9 (67 aa).

An LCN-type CS-alpha/beta domain is found at 1–65; it reads KDGYPVEVTG…TWPLPNKSCG (65 aa). 4 disulfide bridges follow: Cys-11/Cys-64, Cys-15/Cys-40, Cys-24/Cys-45, and Cys-28/Cys-47. Cys-64 is modified (cysteine amide). Residues 65 to 67 constitute a propeptide that is removed on maturation; that stretch reads GKK.

Belongs to the long (4 C-C) scorpion toxin superfamily. Sodium channel inhibitor family. Beta subfamily. As to expression, expressed by the venom gland.

It is found in the secreted. Functionally, beta toxins bind voltage-independently at site-4 of sodium channels (Nav) and shift the voltage of activation toward more negative potentials thereby affecting sodium channel activation and promoting spontaneous and repetitive firing. In Centruroides exilicauda (Bark scorpion), this protein is Neurotoxin Cex9.